A 346-amino-acid polypeptide reads, in one-letter code: D-erythrose-4-phosphate dehydrogenase (346 aa).

Residue 11–12 (RI) participates in NAD(+) binding. Residues 163–165 (SCT), R209, 222–223 (TK), and R245 contribute to the substrate site. C164 functions as the Nucleophile in the catalytic mechanism. Position 327 (N327) interacts with NAD(+).

This sequence belongs to the glyceraldehyde-3-phosphate dehydrogenase family. Epd subfamily. As to quaternary structure, homotetramer.

It localises to the cytoplasm. It catalyses the reaction D-erythrose 4-phosphate + NAD(+) + H2O = 4-phospho-D-erythronate + NADH + 2 H(+). Its pathway is cofactor biosynthesis; pyridoxine 5'-phosphate biosynthesis; pyridoxine 5'-phosphate from D-erythrose 4-phosphate: step 1/5. Catalyzes the NAD-dependent conversion of D-erythrose 4-phosphate to 4-phosphoerythronate. The polypeptide is D-erythrose-4-phosphate dehydrogenase (Vibrio vulnificus (strain YJ016)).